Consider the following 864-residue polypeptide: Leucine--tRNA ligase (864 aa).

Positions 42–52 (PYPSGKLHMGH) match the 'HIGH' region motif. The 'KMSKS' region motif lies at 624-628 (KMSKS). Lys-627 serves as a coordination point for ATP.

This sequence belongs to the class-I aminoacyl-tRNA synthetase family.

Its subcellular location is the cytoplasm. It catalyses the reaction tRNA(Leu) + L-leucine + ATP = L-leucyl-tRNA(Leu) + AMP + diphosphate. The chain is Leucine--tRNA ligase from Burkholderia mallei (strain NCTC 10229).